The primary structure comprises 1004 residues: ABC transporter G family member 25 (1004 aa).

A signal peptide spans methionine 1–cysteine 27. A helical membrane pass occupies residues alanine 271–tyrosine 291. The tract at residues serine 343–alanine 373 is disordered. Residues glutamate 352–glycine 361 are compositionally biased toward basic and acidic residues. Basic residues predominate over residues lysine 362–histidine 372. Residues valine 419–glutamate 659 enclose the ABC transporter domain. Position 451-458 (glycine 451–threonine 458) interacts with ATP. Helical transmembrane passes span alanine 776–isoleucine 796, phenylalanine 804–alanine 824, leucine 886–phenylalanine 906, glutamate 907–threonine 927, tryptophan 943–threonine 963, and phenylalanine 978–leucine 998.

The protein belongs to the ABC transporter superfamily. ABCG family. Eye pigment precursor importer (TC 3.A.1.204) subfamily.

The protein localises to the membrane. This is ABC transporter G family member 25 from Oryza sativa subsp. japonica (Rice).